The following is a 352-amino-acid chain: 4-hydroxy-2-oxovalerate aldolase 5 (352 aa).

A Pyruvate carboxyltransferase domain is found at 9–261 (IRVTDSSLRD…RTGIDTLKII (253 aa)). 17–18 (RD) contacts substrate. Asp18 provides a ligand contact to Mn(2+). His21 (proton acceptor) is an active-site residue. Residues Ser171 and His200 each coordinate substrate. Positions 200 and 202 each coordinate Mn(2+). Tyr291 serves as a coordination point for substrate.

This sequence belongs to the 4-hydroxy-2-oxovalerate aldolase family.

The catalysed reaction is (S)-4-hydroxy-2-oxopentanoate = acetaldehyde + pyruvate. The protein is 4-hydroxy-2-oxovalerate aldolase 5 of Rhodococcus opacus (strain B4).